Here is a 366-residue protein sequence, read N- to C-terminus: Ribosomal RNA large subunit methyltransferase M (366 aa).

S-adenosyl-L-methionine is bound by residues Ser188, 221 to 224, Asp240, Asp260, and Asp277; that span reads CPGG. The Proton acceptor role is filled by Lys306.

Belongs to the class I-like SAM-binding methyltransferase superfamily. RNA methyltransferase RlmE family. RlmM subfamily. Monomer.

Its subcellular location is the cytoplasm. The catalysed reaction is cytidine(2498) in 23S rRNA + S-adenosyl-L-methionine = 2'-O-methylcytidine(2498) in 23S rRNA + S-adenosyl-L-homocysteine + H(+). Catalyzes the 2'-O-methylation at nucleotide C2498 in 23S rRNA. The polypeptide is Ribosomal RNA large subunit methyltransferase M (Shigella sonnei (strain Ss046)).